A 1136-amino-acid polypeptide reads, in one-letter code: 3-O-alpha-D-galactosyl-alpha-L-arabinofuranosidase (1136 aa).

Residues 1 to 36 form the signal peptide; it reads MGISRNRLVPGLVGLAASAAIVLPLGIGMPVSSATA. Residue Glu194 is the Proton donor of the active site. Glu321 acts as the Nucleophile in catalysis. CBM6 domains follow at residues 521–656 and 669–779; these read QAIE…LLLY and VTYP…VTTA. The 59-residue stretch at 987 to 1045 folds into the BIG2 domain; sequence KASLKVGETLSLNASVTPDSVADKTVQWTSSDEQVATVDEHGVVKGVKAGTVTITATSV. The tract at residues 1049–1104 is disordered; sequence SRSGSVEVTVAEDSEQKPSGGDGDNNGEQTGKPDGNTGGQTSDSDAGADSGNNQKH. Positions 1087–1103 are enriched in polar residues; sequence GQTSDSDAGADSGNNQK. The chain crosses the membrane as a helical span at residues 1109 to 1129; that stretch reads GAAVAAVAGVAVLLAGAGLLL.

This sequence belongs to the glycosyl hydrolase 39 family.

It localises to the cell membrane. It is found in the secreted. The protein localises to the cell wall. The enzyme catalyses Hydrolysis of alpha-D-Galp-(1-&gt;3)-L-Araf disaccharides from non-reducing terminals in branches of type II arabinogalactan attached to proteins.. Hydrolase involved in the degradation of the gum arabic arabinogalactan protein (AGP). Catalyzes the release of 3-O-alpha-D-galactopyranosyl-L-arabinose (alpha-D-Galp-(1-&gt;3)-L-Ara) from gum arabic AGP. Can also release 3-O-beta-L-arabinopyranosyl-L-arabinose (beta-L-Arap-(1-&gt;3)-L-Ara) from gum arabic AGP and larch AGP, but the alpha-D-Galp-(1-&gt;3)-L-Ara release activity is 594-fold higher than the beta-L-Arap-(1-&gt;3)-L-Ara release activity. Exhibits no reactivity toward p-nitrophenyl (pNP)-alpha-Araf or any other tested pNP substrate. Plays a crucial role in gum arabic AGP assimilation in B.longum. This Bifidobacterium longum subsp. longum protein is 3-O-alpha-D-galactosyl-alpha-L-arabinofuranosidase.